We begin with the raw amino-acid sequence, 198 residues long: Na(+)-translocating NADH-quinone reductase subunit E (198 aa).

Helical transmembrane passes span Ala11 to Val31, Phe39 to Val59, Phe77 to Ile97, Leu109 to Met129, Ile140 to Ile160, and Leu176 to Val196.

This sequence belongs to the NqrDE/RnfAE family. Composed of six subunits; NqrA, NqrB, NqrC, NqrD, NqrE and NqrF.

Its subcellular location is the cell inner membrane. It carries out the reaction a ubiquinone + n Na(+)(in) + NADH + H(+) = a ubiquinol + n Na(+)(out) + NAD(+). Its function is as follows. NQR complex catalyzes the reduction of ubiquinone-1 to ubiquinol by two successive reactions, coupled with the transport of Na(+) ions from the cytoplasm to the periplasm. NqrA to NqrE are probably involved in the second step, the conversion of ubisemiquinone to ubiquinol. The protein is Na(+)-translocating NADH-quinone reductase subunit E of Proteus mirabilis (strain HI4320).